The following is a 374-amino-acid chain: Aminomethyltransferase (374 aa).

This sequence belongs to the GcvT family. In terms of assembly, the glycine cleavage system is composed of four proteins: P, T, L and H.

It catalyses the reaction N(6)-[(R)-S(8)-aminomethyldihydrolipoyl]-L-lysyl-[protein] + (6S)-5,6,7,8-tetrahydrofolate = N(6)-[(R)-dihydrolipoyl]-L-lysyl-[protein] + (6R)-5,10-methylene-5,6,7,8-tetrahydrofolate + NH4(+). In terms of biological role, the glycine cleavage system catalyzes the degradation of glycine. This Edwardsiella ictaluri (strain 93-146) protein is Aminomethyltransferase.